A 166-amino-acid chain; its full sequence is Ribosome maturation factor RimM (166 aa).

In terms of domain architecture, PRC barrel spans 94-166; the sequence is EGEYYLGKLI…IELKVLDLLK (73 aa).

The protein belongs to the RimM family. Binds ribosomal protein uS19.

Its subcellular location is the cytoplasm. Functionally, an accessory protein needed during the final step in the assembly of 30S ribosomal subunit, possibly for assembly of the head region. Essential for efficient processing of 16S rRNA. May be needed both before and after RbfA during the maturation of 16S rRNA. It has affinity for free ribosomal 30S subunits but not for 70S ribosomes. The sequence is that of Ribosome maturation factor RimM from Borreliella burgdorferi (strain ATCC 35210 / DSM 4680 / CIP 102532 / B31) (Borrelia burgdorferi).